The primary structure comprises 269 residues: Protein MrkE (269 aa).

The 115-residue stretch at 59 to 173 folds into the Response regulatory domain; it reads KVIIVEDEFL…RIINMLQKLT (115 aa). Aspartate 110 carries the 4-aspartylphosphate modification. The HTH LytTR-type domain occupies 197-269; the sequence is INLIKDERII…VAQVSIANRF (73 aa).

May be involved in the regulation of fimbrial expression. This Klebsiella pneumoniae protein is Protein MrkE (mrkE).